A 626-amino-acid chain; its full sequence is Acetolactate synthase large subunit (626 aa).

Polar residues predominate over residues Met1 to Thr13. Positions Met1–Pro23 are disordered. Glu73 is a binding site for thiamine diphosphate. FAD-binding positions include Arg175, His281–Arg302, and Asp324–Asp343. Positions Gln416–Asn496 are thiamine pyrophosphate binding. 2 residues coordinate Mg(2+): Asp467 and Asn494.

Belongs to the TPP enzyme family. As to quaternary structure, dimer of large and small chains. It depends on Mg(2+) as a cofactor. Thiamine diphosphate serves as cofactor.

It carries out the reaction 2 pyruvate + H(+) = (2S)-2-acetolactate + CO2. It functions in the pathway amino-acid biosynthesis; L-isoleucine biosynthesis; L-isoleucine from 2-oxobutanoate: step 1/4. The protein operates within amino-acid biosynthesis; L-valine biosynthesis; L-valine from pyruvate: step 1/4. The sequence is that of Acetolactate synthase large subunit (ilvB) from Corynebacterium glutamicum (strain ATCC 13032 / DSM 20300 / JCM 1318 / BCRC 11384 / CCUG 27702 / LMG 3730 / NBRC 12168 / NCIMB 10025 / NRRL B-2784 / 534).